A 128-amino-acid chain; its full sequence is Diacylglycerol kinase (128 aa).

Position 34 (glutamate 34) interacts with a divalent metal cation. The next 2 helical transmembrane spans lie at 35–55 and 58–78; these read SAFRQIVILALFCIVLASYLT and FLEWGLLILPCFLSVVIELIN. Glutamate 75 acts as the Proton acceptor in catalysis. Glutamate 82 contributes to the a divalent metal cation binding site. The helical transmembrane segment at 108-128 threads the bilayer; it reads LIGLIFWAFIWGRYLLTLYFN.

Belongs to the bacterial diacylglycerol kinase family. It depends on Mg(2+) as a cofactor.

The protein resides in the cell inner membrane. It carries out the reaction a 1,2-diacyl-sn-glycerol + ATP = a 1,2-diacyl-sn-glycero-3-phosphate + ADP + H(+). In terms of biological role, catalyzes the ATP-dependent phosphorylation of sn-l,2-diacylglycerol (DAG) to phosphatidic acid. Involved in the recycling of diacylglycerol produced as a by-product during membrane-derived oligosaccharide (MDO) biosynthesis. This chain is Diacylglycerol kinase (dgkA), found in Helicobacter pylori (strain J99 / ATCC 700824) (Campylobacter pylori J99).